We begin with the raw amino-acid sequence, 578 residues long: CTP synthase 2 (578 aa).

Residues 300–553 form the Glutamine amidotransferase type-1 domain; it reads SIALVGKYTK…MLAASGKLNT (254 aa). Catalysis depends on for GATase activity residues cysteine 399, histidine 526, and glutamate 528.

Belongs to the CTP synthase family.

The enzyme catalyses UTP + L-glutamine + ATP + H2O = CTP + L-glutamate + ADP + phosphate + 2 H(+). It participates in pyrimidine metabolism; CTP biosynthesis via de novo pathway; CTP from UDP: step 2/2. Its function is as follows. Catalyzes the ATP-dependent amination of UTP to CTP with either L-glutamine or ammonia as the source of nitrogen. Constitutes the rate-limiting enzyme in the synthesis of cytosine nucleotides. The chain is CTP synthase 2 (ctps2) from Xenopus laevis (African clawed frog).